Consider the following 469-residue polypeptide: Solute carrier family 52, riboflavin transporter, member 3 (469 aa).

The Cytoplasmic portion of the chain corresponds to 1 to 6; that stretch reads MALLTH. Residues 7–27 traverse the membrane as a helical segment; sequence LLVCTFGMGSWVAINGLWVEL. Topologically, residues 28-43 are extracellular; it reads PLLVTELPEGWYLPSY. A helical transmembrane segment spans residues 44–64; it reads LTMVIQLANIGPLLVTLLHHF. Over 65 to 71 the chain is Cytoplasmic; sequence QPSCLSE. A helical membrane pass occupies residues 72–92; sequence VPIIFTVLAVGTVACALFAFL. At 93 to 105 the chain is on the extracellular side; it reads WNVTSWVLDGRHS. N-linked (GlcNAc...) asparagine glycosylation is present at N94. The helical transmembrane segment at 106–126 threads the bilayer; the sequence is IAFMVLTFFLALVDCTSSVTF. The Cytoplasmic segment spans residues 127-137; the sequence is LPFMSRLPACY. Residues 138–158 traverse the membrane as a helical segment; that stretch reads LTTFFVGEGLSSLLPALVALA. The Extracellular segment spans residues 159–220; that stretch reads QGSGLTTCVN…SRYLPANFSP (62 aa). A glycan (N-linked (GlcNAc...) asparagine) is linked at N168. A helical membrane pass occupies residues 221–241; sequence LVFFLLLSFMMACCLAAFFLL. The Cytoplasmic segment spans residues 242 to 297; the sequence is QRQPRPRESSIEDLLTSQVTLHSIRPREGDDLGPPDPGPSSKAQGLPEEKTASDHP. S251 carries the post-translational modification Phosphoserine. Residues 266-290 are disordered; that stretch reads RPREGDDLGPPDPGPSSKAQGLPEE. The helical transmembrane segment at 298–318 threads the bilayer; that stretch reads AHLAFIYVLVAFVNALTNGVL. Residues 319–335 are Extracellular-facing; that stretch reads PSVQTYSCLSYGPVAYH. The helical transmembrane segment at 336–356 threads the bilayer; that stretch reads LSATLSSMANPLACFLSMFLP. The Cytoplasmic portion of the chain corresponds to 357–361; the sequence is HRSLP. A helical transmembrane segment spans residues 362–382; it reads FLGVLTVLGTGFGAYNMAMAV. Residues 383–396 are Extracellular-facing; sequence MSPCPLMQGHWAGE. Residues 397–417 form a helical membrane-spanning segment; sequence ILIVASWVLFIGCLSYVKVML. Residues 418 to 427 lie on the Cytoplasmic side of the membrane; sequence GVILRDRSRS. The helical transmembrane segment at 428 to 448 threads the bilayer; that stretch reads ALVWCGAAVQLGSLLGALLMF. Over 449–469 the chain is Extracellular; the sequence is PLVNVLRLFSSADFCSLQCSA.

This sequence belongs to the riboflavin transporter family.

Its subcellular location is the cell membrane. It catalyses the reaction riboflavin(in) = riboflavin(out). Functionally, plasma membrane transporter mediating the uptake by cells of the water soluble vitamin B2/riboflavin that plays a key role in biochemical oxidation-reduction reactions of the carbohydrate, lipid, and amino acid metabolism. This chain is Solute carrier family 52, riboflavin transporter, member 3 (SLC52A3), found in Ailuropoda melanoleuca (Giant panda).